The primary structure comprises 138 residues: Small ribosomal subunit protein uS11c (138 aa).

It belongs to the universal ribosomal protein uS11 family. In terms of assembly, part of the 30S ribosomal subunit.

It localises to the plastid. The protein resides in the chloroplast. In Phalaenopsis aphrodite subsp. formosana (Moth orchid), this protein is Small ribosomal subunit protein uS11c.